Reading from the N-terminus, the 391-residue chain is Nuclear hormone receptor family member nhr-218 (391 aa).

Residues 17 to 93 constitute a DNA-binding region (nuclear receptor); it reads PIPCQICTYQ…MGMKAEKIQQ (77 aa). 2 consecutive NR C4-type zinc fingers follow at residues 20–40 and 56–76; these read CQICTYQSHGVNFNVMTCRAC and CKTRKNDCRIDSTERHFCRLC. The 246-residue stretch at 146–391 folds into the NR LBD domain; it reads SRNYSDSPLT…DNFCNLFAMK (246 aa).

This sequence belongs to the nuclear hormone receptor family.

It localises to the nucleus. Functionally, orphan nuclear receptor. The sequence is that of Nuclear hormone receptor family member nhr-218 (nhr-218) from Caenorhabditis elegans.